Consider the following 86-residue polypeptide: Conotoxin Ec15a (86 aa).

The signal sequence occupies residues 1-23; sequence MEKLTILILVATVLLAIQVLGQG. Positions 24–49 are excised as a propeptide; it reads EGEKPPKEWVQQYAAKRLWALMKGPR. Position 50 is a pyrrolidone carboxylic acid (Gln-50).

This sequence belongs to the conotoxin O2 superfamily. Post-translationally, contains 4 disulfide bonds. Expressed by the venom duct.

It localises to the secreted. The sequence is that of Conotoxin Ec15a from Conus emaciatus (False virgin cone).